A 106-amino-acid polypeptide reads, in one-letter code: Cuticle protein CP14.6 (106 aa).

The first 16 residues, M1 to A16, serve as a signal peptide directing secretion. Residues P37–A106 enclose the Chitin-binding type R&amp;R domain.

Functionally, component of the cuticle of tobacco hornworm. The protein is Cuticle protein CP14.6 (CP14.6) of Manduca sexta (Tobacco hawkmoth).